We begin with the raw amino-acid sequence, 317 residues long: Olfactory receptor 8B3 (317 aa).

The Extracellular portion of the chain corresponds to 1-32 (MISMLAGNGSSVTEFVLAGLTDRPELQLPLFY). Asn8 carries an N-linked (GlcNAc...) asparagine glycan. A helical membrane pass occupies residues 33–53 (LFLIIYIITVVGNLGLIILIG). Topologically, residues 54–59 (LNPHLH) are cytoplasmic. Residues 60–80 (TPMYYFLFNLSFIDLCYSSVF) traverse the membrane as a helical segment. Topologically, residues 81–97 (SPKMLINFVSEKNSISY) are extracellular. A helical transmembrane segment spans residues 98–118 (AGCMTQLFLFLFFVISECYML). Residues 119–136 (TSMAYDRYVAICNPLLYK) are Cytoplasmic-facing. Residues 137–157 (VTMSPQICSVISFAAYGMGFA) traverse the membrane as a helical segment. Topologically, residues 158-199 (GSSAHTGCMLRLTFCNVNVINHYLCDILPLLQLSCTSTYVNE) are extracellular. The chain crosses the membrane as a helical span at residues 200–220 (VVVLIVVGINITVPSFTILIS). Residues 221–242 (YVFILANILNIKSTQGRAKAFS) are Cytoplasmic-facing. Residues 243 to 263 (TCSSHIMAISLFFGSAAFMYL) form a helical membrane-spanning segment. The Extracellular portion of the chain corresponds to 264 to 274 (KYSSGSMEQGK). The chain crosses the membrane as a helical span at residues 275–294 (ISSVFYTNVGPMLNPLIYSL). Residues 295–317 (RNKDVKVALRKSLIKFREKTDFN) lie on the Cytoplasmic side of the membrane.

This sequence belongs to the G-protein coupled receptor 1 family.

The protein localises to the cell membrane. In terms of biological role, odorant receptor. In Mus musculus (Mouse), this protein is Olfactory receptor 8B3.